A 214-amino-acid polypeptide reads, in one-letter code: Small ribosomal subunit protein uS4c (214 aa).

Composition is skewed to basic residues over residues 1–14 (MSRY…KIKR) and 36–46 (LSRPKPKKKSQ). The disordered stretch occupies residues 1–46 (MSRYRGPRVKKIKRLGSLPGLTTKKPPIVVRDPRKLSRPKPKKKSQ). The S4 RNA-binding domain occupies 92–153 (MRLDNTLFRL…KEKSKALIQN (62 aa)).

This sequence belongs to the universal ribosomal protein uS4 family. Part of the 30S ribosomal subunit. Contacts protein S5. The interaction surface between S4 and S5 is involved in control of translational fidelity.

Its subcellular location is the plastid. The protein resides in the chloroplast. Its function is as follows. One of the primary rRNA binding proteins, it binds directly to 16S rRNA where it nucleates assembly of the body of the 30S subunit. In terms of biological role, with S5 and S12 plays an important role in translational accuracy. The chain is Small ribosomal subunit protein uS4c (rps4) from Pelargonium hortorum (Common geranium).